The primary structure comprises 131 residues: POU domain, class 3, transcription factor 3 (131 aa).

The POU-specific domain maps to 1 to 60 (FTQRRMKLGFTQADVGLALGTLYGNVFSQTTICRFEALQLSFKNMCKLKPLLNKWLEEAD). A DNA-binding region (homeobox) is located at residues 78–131 (KRKKRTSIEVSVKGALESHFLKCPKPSAQEITNLADSLQLEKEVVRVWFCNNLQ).

It belongs to the POU transcription factor family. Class-3 subfamily. In terms of assembly, homodimer. As to expression, brain.

Its subcellular location is the nucleus. In terms of biological role, transcription factor that acts synergistically with SOX11 and SOX4. Plays a role in neuronal development. Is implicated in an enhancer activity at the embryonic met-mesencephalic junction; the enhancer element contains the octamer motif (5'-ATTTGCAT-3'). The sequence is that of POU domain, class 3, transcription factor 3 (POU3F3) from Sus scrofa (Pig).